Reading from the N-terminus, the 483-residue chain is Glutamate--tRNA ligase (483 aa).

Positions 11 to 21 match the 'HIGH' region motif; it reads PSPTGLLHIGN. The short motif at 255 to 259 is the 'KMSKS' region element; that stretch reads KLSKR. Lysine 258 provides a ligand contact to ATP.

The protein belongs to the class-I aminoacyl-tRNA synthetase family. Glutamate--tRNA ligase type 1 subfamily. Monomer.

Its subcellular location is the cytoplasm. It carries out the reaction tRNA(Glu) + L-glutamate + ATP = L-glutamyl-tRNA(Glu) + AMP + diphosphate. Catalyzes the attachment of glutamate to tRNA(Glu) in a two-step reaction: glutamate is first activated by ATP to form Glu-AMP and then transferred to the acceptor end of tRNA(Glu). This chain is Glutamate--tRNA ligase, found in Lactococcus lactis subsp. lactis (strain IL1403) (Streptococcus lactis).